A 95-amino-acid polypeptide reads, in one-letter code: Parvalbumin alpha (95 aa).

Ser-19 carries the post-translational modification Phosphoserine. 2 EF-hand domains span residues 34-69 (KNRE…FSAD) and 73-95 (LSDT…KIGA). The Ca(2+) site is built by Asp-47, Asp-49, Ser-51, Phe-53, Glu-55, Glu-58, Asp-86, Asp-88, Asp-90, and Lys-92.

This sequence belongs to the parvalbumin family.

Its function is as follows. In muscle, parvalbumin is thought to be involved in relaxation after contraction. It binds two calcium ions. In Cavia porcellus (Guinea pig), this protein is Parvalbumin alpha (PVALB).